A 197-amino-acid polypeptide reads, in one-letter code: Probable GTP-binding protein EngB (197 aa).

Positions 22–195 (NLPEIAFVGR…VDYLFDDLVE (174 aa)) constitute an EngB-type G domain. Residues 30-37 (GRSNVGKS), 57-61 (GKTRL), 75-78 (DLPG), 142-145 (TKSD), and 174-176 (FSS) contribute to the GTP site. Residues serine 37 and threonine 59 each coordinate Mg(2+).

It belongs to the TRAFAC class TrmE-Era-EngA-EngB-Septin-like GTPase superfamily. EngB GTPase family. Requires Mg(2+) as cofactor.

Its function is as follows. Necessary for normal cell division and for the maintenance of normal septation. This Clostridium perfringens (strain SM101 / Type A) protein is Probable GTP-binding protein EngB.